We begin with the raw amino-acid sequence, 247 residues long: Probable phosphatase swp_1620 (247 aa).

Residues H8, H10, H16, H41, E74, H102, H132, D193, and H195 each contribute to the Zn(2+) site.

Belongs to the PHP family. Zn(2+) serves as cofactor.

The protein is Probable phosphatase swp_1620 of Shewanella piezotolerans (strain WP3 / JCM 13877).